A 60-amino-acid polypeptide reads, in one-letter code: Arabinogalactan protein 12 (60 aa).

An N-terminal signal peptide occupies residues 1–27; sequence MESMKMKLIVVLMVAIVAFSAVGNVAA. Glutamine 28 is subject to Pyrrolidone carboxylic acid. 4-hydroxyproline occurs at positions 32, 34, and 36. O-linked (Ara...) hydroxyproline glycans are attached at residues proline 32, proline 34, and proline 36. Serine 38 carries GPI-anchor amidated serine lipidation. The propeptide at 39–60 is removed in mature form; the sequence is DAAMFVPALFASVAALASGFLF.

Belongs to the AG-peptide AGP family. Contains 4-hydroxyproline; hydroxylated on Pro-32, Pro-34 and Pro-36. Post-translationally, O-glycosylated on hydroxyprolines; noncontiguous hydroxylproline residues are glycosylated with arabinogalactan. As to expression, expressed in reproductive tissues. Expressed in chalaza, funiculus, stigma, septum, style and transmitting tract.

It localises to the cell membrane. Proteoglycan that seems to be implicated in diverse developmental roles such as differentiation, cell-cell recognition, embryogenesis and programmed cell death. The polypeptide is Arabinogalactan protein 12 (Arabidopsis thaliana (Mouse-ear cress)).